The primary structure comprises 349 residues: Small ribosomal subunit protein uS2 (349 aa).

The protein belongs to the universal ribosomal protein uS2 family.

This chain is Small ribosomal subunit protein uS2, found in Methylocella silvestris (strain DSM 15510 / CIP 108128 / LMG 27833 / NCIMB 13906 / BL2).